The sequence spans 175 residues: Ribosome maturation factor RimM (175 aa).

Residues 94–166 enclose the PRC barrel domain; the sequence is SDSWYEHELI…FIRLVPPGGL (73 aa).

It belongs to the RimM family. As to quaternary structure, binds ribosomal protein uS19.

The protein localises to the cytoplasm. Its function is as follows. An accessory protein needed during the final step in the assembly of 30S ribosomal subunit, possibly for assembly of the head region. Essential for efficient processing of 16S rRNA. May be needed both before and after RbfA during the maturation of 16S rRNA. It has affinity for free ribosomal 30S subunits but not for 70S ribosomes. This chain is Ribosome maturation factor RimM, found in Renibacterium salmoninarum (strain ATCC 33209 / DSM 20767 / JCM 11484 / NBRC 15589 / NCIMB 2235).